Reading from the N-terminus, the 231-residue chain is NADH-ubiquinone oxidoreductase chain 4 (231 aa).

6 helical membrane-spanning segments follow: residues 1–21 (PIAGSMVLAAILLKLGGYGII), 34–54 (LFLPFIVLALWGAILANLTCL), 61–80 (SLIAYSSISHMGLVVAAIII), 84–106 (WGLSGAMALMIAHGFTSSALFCL), 128–148 (ILPMATTWWLLANLMNIATPP), and 169–189 (TIILLGLSMLITASYSLHMFL).

This sequence belongs to the complex I subunit 4 family.

The protein resides in the mitochondrion membrane. It carries out the reaction a ubiquinone + NADH + 5 H(+)(in) = a ubiquinol + NAD(+) + 4 H(+)(out). Functionally, core subunit of the mitochondrial membrane respiratory chain NADH dehydrogenase (Complex I) that is believed to belong to the minimal assembly required for catalysis. Complex I functions in the transfer of electrons from NADH to the respiratory chain. The immediate electron acceptor for the enzyme is believed to be ubiquinone. This Metlapilcoatlus nummifer (Mexican jumping pitviper) protein is NADH-ubiquinone oxidoreductase chain 4 (MT-ND4).